The sequence spans 289 residues: Shikimate dehydrogenase (NADP(+)) (289 aa).

Shikimate contacts are provided by residues 19–21 and threonine 66; that span reads SLS. Lysine 70 (proton acceptor) is an active-site residue. Positions 91 and 106 each coordinate shikimate. NADP(+)-binding positions include 131-135 and leucine 229; that span reads GNGGA. Residue tyrosine 231 coordinates shikimate. Glycine 252 serves as a coordination point for NADP(+).

Belongs to the shikimate dehydrogenase family. Homodimer.

The enzyme catalyses shikimate + NADP(+) = 3-dehydroshikimate + NADPH + H(+). Its pathway is metabolic intermediate biosynthesis; chorismate biosynthesis; chorismate from D-erythrose 4-phosphate and phosphoenolpyruvate: step 4/7. Involved in the biosynthesis of the chorismate, which leads to the biosynthesis of aromatic amino acids. Catalyzes the reversible NADPH linked reduction of 3-dehydroshikimate (DHSA) to yield shikimate (SA). The chain is Shikimate dehydrogenase (NADP(+)) from Nostoc sp. (strain PCC 7120 / SAG 25.82 / UTEX 2576).